We begin with the raw amino-acid sequence, 134 residues long: Histone H2B (134 aa).

Polar residues predominate over residues 1 to 10 (MSDKASTPKK). 2 disordered regions span residues 1–29 (MSDK…EAKK) and 113–134 (VSEG…SKSR). Residues 12–29 (ATKDATKPKKVGDEEAKK) are compositionally biased toward basic and acidic residues. Residues 125–134 (GQPTSGSKSR) show a composition bias toward polar residues.

Belongs to the histone H2B family. As to quaternary structure, the nucleosome is a histone octamer containing two molecules each of H2A, H2B, H3 and H4 assembled in one H3-H4 heterotetramer and two H2A-H2B heterodimers. The octamer wraps approximately 147 bp of DNA.

The protein resides in the nucleus. Its subcellular location is the chromosome. Core component of nucleosome. Nucleosomes wrap and compact DNA into chromatin, limiting DNA accessibility to the cellular machineries which require DNA as a template. Histones thereby play a central role in transcription regulation, DNA repair, DNA replication and chromosomal stability. DNA accessibility is regulated via a complex set of post-translational modifications of histones, also called histone code, and nucleosome remodeling. This chain is Histone H2B, found in Entamoeba invadens.